The following is a 338-amino-acid chain: Formamidase (338 aa).

A CN hydrolase domain is found at 14–257 (VGIGLVQLQL…NEIITAEVRP (244 aa)). Residue Glu-60 is the Proton acceptor of the active site. Lys-129 (proton donor) is an active-site residue. The active-site Nucleophile is the Cys-162.

Belongs to the carbon-nitrogen hydrolase superfamily. Aliphatic amidase family.

It catalyses the reaction formamide + H2O = formate + NH4(+). Is an aliphatic amidase with a restricted substrate specificity, as it only hydrolyzes formamide. In Allorhizobium ampelinum (strain ATCC BAA-846 / DSM 112012 / S4) (Agrobacterium vitis (strain S4)), this protein is Formamidase.